The primary structure comprises 142 residues: MLEEFKKFALRGNVVDLAVGVIIGAAFGAIVNSLVQDVIMPIIGAITGGLDFSNYYIPLSSKVQAGMPYAEAKKVGAVIGYGQFLTLAVNFTIIAFVLFMVIRAMNGLKSKEEAKPKPEAEVPADVKLLAEIRDLLAARREA.

3 helical membrane passes run 14–34, 38–58, and 82–102; these read VVDLAVGVIIGAAFGAIVNSL, VIMPIIGAITGGLDFSNYYIP, and GQFLTLAVNFTIIAFVLFMVI.

It belongs to the MscL family. As to quaternary structure, homopentamer.

The protein resides in the cell inner membrane. Functionally, channel that opens in response to stretch forces in the membrane lipid bilayer. May participate in the regulation of osmotic pressure changes within the cell. The protein is Large-conductance mechanosensitive channel of Methylorubrum populi (strain ATCC BAA-705 / NCIMB 13946 / BJ001) (Methylobacterium populi).